The primary structure comprises 400 residues: Aminomethyltransferase, mitochondrial (400 aa).

Substrate-binding residues include Glu-221, Arg-250, and Tyr-397.

It belongs to the GcvT family. As to quaternary structure, component of the glycine decarboxylase complex (GDC), which is composed of four proteins: P, T, L and H.

The protein resides in the mitochondrion. The enzyme catalyses N(6)-[(R)-S(8)-aminomethyldihydrolipoyl]-L-lysyl-[protein] + (6S)-5,6,7,8-tetrahydrofolate = N(6)-[(R)-dihydrolipoyl]-L-lysyl-[protein] + (6R)-5,10-methylene-5,6,7,8-tetrahydrofolate + NH4(+). Its function is as follows. The glycine cleavage system (glycine decarboxylase complex) catalyzes the degradation of glycine. This Saccharomyces cerevisiae (strain ATCC 204508 / S288c) (Baker's yeast) protein is Aminomethyltransferase, mitochondrial (GCV1).